Reading from the N-terminus, the 281-residue chain is Hexaprenyl pyrophosphate synthase (281 aa).

K42, R45, and H74 together coordinate isopentenyl diphosphate. Mg(2+) is bound by residues D81 and D85. An isopentenyl diphosphate-binding site is contributed by R91.

This sequence belongs to the FPP/GGPP synthase family. Homodimer. Mg(2+) is required as a cofactor.

The enzyme catalyses 2 isopentenyl diphosphate + (2E,6E,10E)-geranylgeranyl diphosphate = all-trans-hexaprenyl diphosphate + 2 diphosphate. Functionally, catalyzes consecutive E-type condensation of two isopentenyl pyrophosphate (IPP) molecules with an allylic substrate such as geranylgeranyl diphosphate (GGPP), farnesyl diphosphate (FPP) or geranyl diphosphate (GPP) to yield the medium-chain product trans-C30-hexaprenyl pyrophosphate (HexPP). GGPP is the physiological substrate. The chain is Hexaprenyl pyrophosphate synthase (gdS-2) from Saccharolobus solfataricus (strain ATCC 35092 / DSM 1617 / JCM 11322 / P2) (Sulfolobus solfataricus).